The sequence spans 413 residues: Protein arginine N-methyltransferase 2 (413 aa).

Residues 148–187 (LDGSDTEMGDKGGSARDVPASADSAPADSAGHSSSEPTAV) form a disordered region. Over residues 162 to 182 (ARDVPASADSAPADSAGHSSS) the composition is skewed to low complexity. Residues 192–413 (TAAHQDTYLQ…HYYHPEISFQ (222 aa)) form the RMT2 domain. Residues tyrosine 199, methionine 229, 252-257 (FGMGII), 273-275 (EAH), 300-301 (WQ), and aspartate 321 each bind S-adenosyl-L-methionine.

It belongs to the class I-like SAM-binding methyltransferase superfamily. RMT2 methyltransferase family. Monomer.

It is found in the cytoplasm. The protein localises to the nucleus. Functionally, S-adenosyl-L-methionine-dependent protein-arginine N-methyltransferase that methylates the delta-nitrogen atom of arginine residues to form N5-methylarginine (type IV) in target proteins. Monomethylates ribosomal protein L12. The chain is Protein arginine N-methyltransferase 2 from Eremothecium gossypii (strain ATCC 10895 / CBS 109.51 / FGSC 9923 / NRRL Y-1056) (Yeast).